The primary structure comprises 136 residues: Large ribosomal subunit protein uL16 (136 aa).

It belongs to the universal ribosomal protein uL16 family. Part of the 50S ribosomal subunit.

Binds 23S rRNA and is also seen to make contacts with the A and possibly P site tRNAs. The protein is Large ribosomal subunit protein uL16 of Photobacterium profundum (strain SS9).